A 95-amino-acid polypeptide reads, in one-letter code: Co-chaperonin GroES (95 aa).

It belongs to the GroES chaperonin family. Heptamer of 7 subunits arranged in a ring. Interacts with the chaperonin GroEL.

Its subcellular location is the cytoplasm. Together with the chaperonin GroEL, plays an essential role in assisting protein folding. The GroEL-GroES system forms a nano-cage that allows encapsulation of the non-native substrate proteins and provides a physical environment optimized to promote and accelerate protein folding. GroES binds to the apical surface of the GroEL ring, thereby capping the opening of the GroEL channel. The protein is Co-chaperonin GroES of Chlorobaculum tepidum (strain ATCC 49652 / DSM 12025 / NBRC 103806 / TLS) (Chlorobium tepidum).